The following is a 456-amino-acid chain: 3-isopropylmalate dehydratase large subunit (456 aa).

[4Fe-4S] cluster-binding residues include Cys-336, Cys-396, and Cys-399.

The protein belongs to the aconitase/IPM isomerase family. LeuC type 1 subfamily. In terms of assembly, heterodimer of LeuC and LeuD. It depends on [4Fe-4S] cluster as a cofactor.

It catalyses the reaction (2R,3S)-3-isopropylmalate = (2S)-2-isopropylmalate. It participates in amino-acid biosynthesis; L-leucine biosynthesis; L-leucine from 3-methyl-2-oxobutanoate: step 2/4. In terms of biological role, catalyzes the isomerization between 2-isopropylmalate and 3-isopropylmalate, via the formation of 2-isopropylmaleate. The polypeptide is 3-isopropylmalate dehydratase large subunit (Staphylococcus haemolyticus (strain JCSC1435)).